The primary structure comprises 328 residues: Probable voltage-gated potassium channel subunit beta (328 aa).

Residues Trp-21, Gln-27, and Asp-49 each contribute to the NADP(+) site. Tyr-54 acts as the Proton donor/acceptor in catalysis. NADP(+) is bound by residues Ser-152, Gln-178, Trp-207, Ser-208, Pro-209, Leu-210, Ala-211, Lys-218, Arg-229, Gly-285, Thr-287, Gln-291, Glu-294, and Asn-295.

The protein belongs to the shaker potassium channel beta subunit family. In terms of assembly, forms heteromultimeric complexes with potassium channel alpha subunits. As to expression, expressed in roots, leaves and flowers (at protein level).

In terms of biological role, probable accessory potassium channel protein which modulates the activity of the pore-forming alpha subunit. The sequence is that of Probable voltage-gated potassium channel subunit beta (KAB1) from Arabidopsis thaliana (Mouse-ear cress).